Consider the following 579-residue polypeptide: MFFRVFLHFIRSHSATAVDFLPVMVHRLPVFKRYMGNTPQKKAVFGQCRGLPCVAPLLTTVEEAPRGISARVWGHFPKWLNGSLLRIGPGKFEFGKDKYNHWFDGMALLHQFRMAKGTVTYRSKFLQSDTYKANSAKNRIVISEFGTLALPDPCKNVFERFMSRFELPGKAAAMTDNTNVNYVRYKGDYYLCTETNFMNKVDIETLEKTEKVDWSKFIAVNGATAHPHYDLDGTAYNMGNSFGPYGFSYKVIRVPPEKVDLGETIHGVQVICSIASTEKGKPSYYHSFGMTRNYIIFIEQPLKMNLWKIATSKIRGKAFSDGISWEPQCNTRFHVVEKRTGQLLPGRYYSKPFVTFHQINAFEDQGCVIIDLCCQDNGRTLEVYQLQNLRKAGEGLDQVHNSAAKSFPRRFVLPLNVSLNAPEGDNLSPLSYTSASAVKQADGTIWCSHENLHQEDLEKEGGIEFPQIYYDRFSGKKYHFFYGCGFRHLVGDSLIKVDVVNKTLKVWREDGFYPSEPVFVPAPGTNEEDGGVILSVVITPNQNESNFILVLDAKNFEELGRAEVPVQMPYGFHGTFIPI.

Fe cation is bound by residues His-226, His-286, His-357, and His-573.

It belongs to the carotenoid oxygenase family. Requires Fe(2+) as cofactor. Highly expressed in retinal pigment epithelium. Also expressed in stomach, small intestine, liver, testis, kidney, adrenal gland, pancreas, heart, skeletal muscle and prostate (at protein level).

Its subcellular location is the mitochondrion. The catalysed reaction is all-trans-beta-carotene + O2 = beta-ionone + all-trans-10'-apo-beta-carotenal. The enzyme catalyses 5-cis-lycopene + O2 = 5-cis-10'-apo-lycopenal + (3E,5E)-6,10-dimethylundeca-3,5,9-trien-2-one. It catalyses the reaction 13-cis-lycopene + O2 = 13-cis-10'-apo-lycopenal + (3E,5E)-6,10-dimethylundeca-3,5,9-trien-2-one. It carries out the reaction lutein + O2 = (3R,6R)-hydroxy-alpha-ionone + (3R)-3-hydroxy-10'-apo-beta-carotenal. The catalysed reaction is lutein + O2 = (3R,6R)-3-hydroxy-10'-apo-alpha-carotenal + (3R)-hydroxy-beta-ionone. The enzyme catalyses all-trans-zeaxanthin + 2 O2 = 4,9-dimethyldodeca-2,4,6,8,10-pentaenedial + 2 (3R)-hydroxy-beta-ionone. It catalyses the reaction all-trans-zeaxanthin + O2 = (3R)-3-hydroxy-10'-apo-beta-carotenal + (3R)-hydroxy-beta-ionone. It carries out the reaction beta-cryptoxanthin + O2 = all-trans-10'-apo-beta-carotenal + (3R)-hydroxy-beta-ionone. The catalysed reaction is all-trans-10'-apo-beta-carotenal + O2 = beta-ionone + 4,9-dimethyldodeca-2,4,6,8,10-pentaenedial. The enzyme catalyses (3R)-3-hydroxy-10'-apo-beta-carotenal + O2 = 4,9-dimethyldodeca-2,4,6,8,10-pentaenedial + (3R)-hydroxy-beta-ionone. It catalyses the reaction (3R,6R)-3-hydroxy-10'-apo-alpha-carotenal + O2 = (3R,6R)-hydroxy-alpha-ionone + 4,9-dimethyldodeca-2,4,6,8,10-pentaenedial. Its function is as follows. Broad specificity mitochondrial dioxygenase that mediates the asymmetric oxidative cleavage of carotenoids. Cleaves carotenes (pure hydrocarbon carotenoids) such as all-trans-beta-carotene and lycopene as well as xanthophylls (oxygenated carotenoids) such as zeaxanthin, lutein and beta-cryptoxanthin at both the 9,10 and the 9',10' carbon-carbon double bond. Through its function in carotenoids metabolism regulates oxidative stress and the production of important signaling molecules. This chain is Carotenoid-cleaving dioxygenase, mitochondrial, found in Homo sapiens (Human).